The following is a 109-amino-acid chain: ATP-dependent Clp protease adapter protein ClpS (109 aa).

The tract at residues M1–E20 is disordered.

The protein belongs to the ClpS family. Binds to the N-terminal domain of the chaperone ClpA.

In terms of biological role, involved in the modulation of the specificity of the ClpAP-mediated ATP-dependent protein degradation. The protein is ATP-dependent Clp protease adapter protein ClpS of Caulobacter vibrioides (strain NA1000 / CB15N) (Caulobacter crescentus).